Reading from the N-terminus, the 54-residue chain is U1-ctenitoxin-Pr1a (54 aa).

5 disulfide bridges follow: C2–C19, C9–C25, C16–C51, C18–C39, and C27–C37.

As to expression, expressed by the venom gland.

It is found in the secreted. Functionally, omega-agatoxins are antagonists of voltage-gated calcium channels (Cav). Causes rapid general flaccid paralysis followed by death in 10-30 minutes when injected in mice at dose levels of 5 ug per mouse. The protein is U1-ctenitoxin-Pr1a of Phoneutria reidyi (Brazilian Amazonian armed spider).